We begin with the raw amino-acid sequence, 86 residues long: Small ribosomal subunit protein uS15 (86 aa).

Residues 1 to 10 are compositionally biased toward polar residues; it reads MSIDTQSIIE. Positions 1–21 are disordered; it reads MSIDTQSIIENNKRSAHDTGS.

Belongs to the universal ribosomal protein uS15 family. In terms of assembly, part of the 30S ribosomal subunit. Forms a bridge to the 50S subunit in the 70S ribosome, contacting the 23S rRNA.

In terms of biological role, one of the primary rRNA binding proteins, it binds directly to 16S rRNA where it helps nucleate assembly of the platform of the 30S subunit by binding and bridging several RNA helices of the 16S rRNA. Functionally, forms an intersubunit bridge (bridge B4) with the 23S rRNA of the 50S subunit in the ribosome. In Xylella fastidiosa (strain 9a5c), this protein is Small ribosomal subunit protein uS15.